A 154-amino-acid polypeptide reads, in one-letter code: Endoribonuclease YbeY (154 aa).

Residues His-120, His-124, and His-130 each contribute to the Zn(2+) site.

This sequence belongs to the endoribonuclease YbeY family. Zn(2+) serves as cofactor.

Its subcellular location is the cytoplasm. Single strand-specific metallo-endoribonuclease involved in late-stage 70S ribosome quality control and in maturation of the 3' terminus of the 16S rRNA. In Oceanobacillus iheyensis (strain DSM 14371 / CIP 107618 / JCM 11309 / KCTC 3954 / HTE831), this protein is Endoribonuclease YbeY.